A 264-amino-acid polypeptide reads, in one-letter code: 3-methyl-2-oxobutanoate hydroxymethyltransferase (264 aa).

The Mg(2+) site is built by D46 and D85. 3-methyl-2-oxobutanoate contacts are provided by residues D46–S47, D85, and K113. E115 is a Mg(2+) binding site. The active-site Proton acceptor is the E181.

Belongs to the PanB family. Homodecamer; pentamer of dimers. The cofactor is Mg(2+).

The protein localises to the cytoplasm. It carries out the reaction 3-methyl-2-oxobutanoate + (6R)-5,10-methylene-5,6,7,8-tetrahydrofolate + H2O = 2-dehydropantoate + (6S)-5,6,7,8-tetrahydrofolate. It functions in the pathway cofactor biosynthesis; (R)-pantothenate biosynthesis; (R)-pantoate from 3-methyl-2-oxobutanoate: step 1/2. Functionally, catalyzes the reversible reaction in which hydroxymethyl group from 5,10-methylenetetrahydrofolate is transferred onto alpha-ketoisovalerate to form ketopantoate. This chain is 3-methyl-2-oxobutanoate hydroxymethyltransferase, found in Salmonella typhi.